The sequence spans 237 residues: Phosphoribosylaminoimidazole-succinocarboxamide synthase (237 aa).

Belongs to the SAICAR synthetase family.

It catalyses the reaction 5-amino-1-(5-phospho-D-ribosyl)imidazole-4-carboxylate + L-aspartate + ATP = (2S)-2-[5-amino-1-(5-phospho-beta-D-ribosyl)imidazole-4-carboxamido]succinate + ADP + phosphate + 2 H(+). The protein operates within purine metabolism; IMP biosynthesis via de novo pathway; 5-amino-1-(5-phospho-D-ribosyl)imidazole-4-carboxamide from 5-amino-1-(5-phospho-D-ribosyl)imidazole-4-carboxylate: step 1/2. This is Phosphoribosylaminoimidazole-succinocarboxamide synthase from Escherichia coli O7:K1 (strain IAI39 / ExPEC).